A 55-amino-acid polypeptide reads, in one-letter code: Large ribosomal subunit protein bL33B (55 aa).

It belongs to the bacterial ribosomal protein bL33 family.

This chain is Large ribosomal subunit protein bL33B, found in Salinispora tropica (strain ATCC BAA-916 / DSM 44818 / JCM 13857 / NBRC 105044 / CNB-440).